Consider the following 419-residue polypeptide: G protein-activated inward rectifier potassium channel 4 (419 aa).

Residues 1 to 24 (MAGDSRNAMNQDMEIGVTPRDPKK) form a disordered region. At 1–86 (MAGDSRNAMN…LFTTLVDLKW (86 aa)) the chain is on the cytoplasmic side. At serine 5 the chain carries Phosphoserine. A helical membrane pass occupies residues 87 to 111 (RFNLLVFTMVYTITWLFFGFIWWLI). Residues 112–135 (AYIRGDLDHVGDREWIPCVENLSG) are Extracellular-facing. An intramembrane region (helical; Pore-forming) is located at residues 136–147 (FVSAFLFSIETE). Positions 148-154 (TTIGYGF) form an intramembrane region, pore-forming. The Selectivity filter signature appears at 149 to 154 (TIGYGF). The Extracellular portion of the chain corresponds to 155–163 (RVITEKCPE). A helical transmembrane segment spans residues 164-185 (GIVLLLVQAILGSIVNAFMVGC). At 186 to 419 (MFVKISQPKK…SGSQETKDSA (234 aa)) the chain is on the cytoplasmic side. Residues 381–419 (PSPPLPGGCVGAELGAEAEQEGEEEPEGLSGSQETKDSA) form a disordered region. Residues 396-407 (AEAEQEGEEEPE) are compositionally biased toward acidic residues.

Belongs to the inward rectifier-type potassium channel (TC 1.A.2.1) family. KCNJ5 subfamily. As to quaternary structure, associates with KCNJ3/GIRK1 or KCNJ6/GIRK2 to form a G-protein-activated heteromultimer pore-forming unit. The resulting inward current is much larger.

It is found in the membrane. The catalysed reaction is K(+)(in) = K(+)(out). With respect to regulation, heteromultimer composed of KCNJ3/GIRK1 and KCNJ5/GIRK4 is activated by phosphatidylinositol 4,5 biphosphate (PtdIns(4,5)P2). Functionally, inward rectifier potassium channels are characterized by a greater tendency to allow potassium to flow into the cell rather than out of it. Their voltage dependence is regulated by the concentration of extracellular potassium; as external potassium is raised, the voltage range of the channel opening shifts to more positive voltages. The inward rectification is mainly due to the blockage of outward current by internal magnesium. This receptor plays a crucial role in regulating the heartbeat. Can be blocked by external barium. This potassium channel is controlled by G proteins. This Bos taurus (Bovine) protein is G protein-activated inward rectifier potassium channel 4 (KCNJ5).